A 524-amino-acid polypeptide reads, in one-letter code: Tyrosine-protein kinase HCK (524 aa).

Disordered stretches follow at residues 1–20 and 35–71; these read MGGRSSCEDPGCPRGEGRVP and KASKIEPNANQKGPVYVPDPTSPKKLGPNSINSLPPG. G2 carries the N-myristoyl glycine lipid modification. Residue G3 is the site of S-palmitoyl cysteine attachment. Y50 is subject to Phosphotyrosine; by autocatalysis. The 61-residue stretch at 76 to 136 folds into the SH3 domain; the sequence is SEDTIVVALY…PSNYVARVNS (61 aa). The 98-residue stretch at 142–239 folds into the SH2 domain; sequence WFFKGISRKD…GLCQKLSVPC (98 aa). Position 200 is a phosphothreonine (T200). Y207 is subject to Phosphotyrosine. The region spanning 260-513 is the Protein kinase domain; sequence LQMEKKLGAG…YIQSVLDDFY (254 aa). Residues 266 to 274 and K288 contribute to the ATP site; that span reads LGAGQFGEV. D379 acts as the Proton acceptor in catalysis. Phosphotyrosine; by autocatalysis is present on Y409. Residue S460 is modified to Phosphoserine. Y520 carries the phosphotyrosine modification.

The protein belongs to the protein kinase superfamily. Tyr protein kinase family. SRC subfamily. In terms of assembly, interacts with ADAM15. Interacts with FASLG. Interacts with ARRB1 and ARRB2. Interacts with FCGR1A; the interaction may be indirect. Interacts with IL6ST. Interacts (via SH3 domain) with ELMO1. Interacts (via SH3 domain) with TP73. Interacts with YAP1. Interacts with ABL1 and ITGB1, and thereby recruits ABL1 to activated ITGB1. Interacts (via SH2 domain) with FLT3 (tyrosine phosphorylated). Interacts with CBL. Interacts with VAV1, WAS and RAPGEF1. Interacts (via SH3 domain) with WDCP. Post-translationally, phosphorylated on several tyrosine residues. Autophosphorylated. Becomes rapidly phosphorylated upon activation of the immunoglobulin receptors FCGR1A and FCGR2A. Phosphorylation at Tyr-409 increases kinase activity. Phosphorylation at Tyr-520 inhibits kinase activity. Kinase activity is not required for phosphorylation at Tyr-520, suggesting that this site may be a target of other kinases. In terms of processing, ubiquitinated by CBL, leading to its degradation via the proteasome. Isoform 2 palmitoylation at position 2 requires prior myristoylation. Palmitoylation at position 3 is required for caveolar localization of isoform 2. In terms of tissue distribution, expressed strongly in spleen and at very low levels in thymus.

Its subcellular location is the cytoplasmic vesicle. The protein localises to the secretory vesicle. The protein resides in the cytoplasm. It is found in the cytosol. It localises to the membrane. Its subcellular location is the caveola. The protein localises to the lysosome. The protein resides in the cell projection. It is found in the podosome membrane. It localises to the cell membrane. Its subcellular location is the cell junction. The protein localises to the focal adhesion. The protein resides in the cytoskeleton. It is found in the golgi apparatus. It localises to the nucleus. It carries out the reaction L-tyrosyl-[protein] + ATP = O-phospho-L-tyrosyl-[protein] + ADP + H(+). Subject to autoinhibition, mediated by intramolecular interactions involving the SH2 and SH3 domains. Kinase activity is also regulated by phosphorylation at regulatory tyrosine residues. Phosphorylation at Tyr-409 is required for optimal activity. Phosphorylation at Tyr-520 inhibits kinase activity. Its function is as follows. Non-receptor tyrosine-protein kinase found in hematopoietic cells that transmits signals from cell surface receptors and plays an important role in the regulation of innate immune responses, including neutrophil, monocyte, macrophage and mast cell functions, phagocytosis, cell survival and proliferation, cell adhesion and migration. Acts downstream of receptors that bind the Fc region of immunoglobulins, such as FCGR1A and FCGR2A, but also CSF3R, PLAUR, the receptors for IFNG, IL2, IL6 and IL8, and integrins, such as ITGB1 and ITGB2. During the phagocytic process, mediates mobilization of secretory lysosomes, degranulation, and activation of NADPH oxidase to bring about the respiratory burst. Plays a role in the release of inflammatory molecules. Promotes reorganization of the actin cytoskeleton and actin polymerization, formation of podosomes and cell protrusions. Inhibits TP73-mediated transcription activation and TP73-mediated apoptosis. Phosphorylates CBL in response to activation of immunoglobulin gamma Fc region receptors. Phosphorylates ADAM15, BCR, ELMO1, FCGR2A, GAB1, GAB2, RAPGEF1, STAT5B, TP73, VAV1 and WAS. The polypeptide is Tyrosine-protein kinase HCK (Hck) (Rattus norvegicus (Rat)).